We begin with the raw amino-acid sequence, 174 residues long: Shikimate kinase 2 (174 aa).

12-17 (GCGKTT) provides a ligand contact to ATP. Positions 16 and 32 each coordinate Mg(2+). Substrate contacts are provided by Asp34, Arg58, and Gly79. Residues 112–126 (QAAPEEDLRPTLTGK) are LID domain. An ATP-binding site is contributed by Arg120. Arg139 contacts substrate.

Belongs to the shikimate kinase family. AroL subfamily. As to quaternary structure, monomer. It depends on Mg(2+) as a cofactor.

Its subcellular location is the cytoplasm. The catalysed reaction is shikimate + ATP = 3-phosphoshikimate + ADP + H(+). The protein operates within metabolic intermediate biosynthesis; chorismate biosynthesis; chorismate from D-erythrose 4-phosphate and phosphoenolpyruvate: step 5/7. In terms of biological role, catalyzes the specific phosphorylation of the 3-hydroxyl group of shikimic acid using ATP as a cosubstrate. This Shigella boydii serotype 4 (strain Sb227) protein is Shikimate kinase 2.